Reading from the N-terminus, the 1026-residue chain is Tyrosine-protein phosphatase 1 (1026 aa).

Residues isoleucine 29–threonine 315 enclose the FERM domain. 4 disordered regions span residues serine 376–serine 396, proline 430–glutamine 456, glycine 489–asparagine 515, and serine 584–valine 616. The span at aspartate 446–glutamine 456 shows a compositional bias: polar residues. Positions serine 600–proline 609 are enriched in low complexity. Residues threonine 617 to alanine 689 form the PDZ domain. In terms of domain architecture, Tyrosine-protein phosphatase spans valine 753–alanine 1011. Substrate is bound by residues aspartate 920, cysteine 952–arginine 958, and glutamine 996. Residue cysteine 952 is the Phosphocysteine intermediate of the active site.

Belongs to the protein-tyrosine phosphatase family. Non-receptor class subfamily.

It is found in the cytoplasm. The protein resides in the cytoskeleton. The catalysed reaction is O-phospho-L-tyrosyl-[protein] + H2O = L-tyrosyl-[protein] + phosphate. This Caenorhabditis elegans protein is Tyrosine-protein phosphatase 1 (ptp-1).